The following is a 330-amino-acid chain: ADP-L-glycero-D-manno-heptose-6-epimerase (330 aa).

NADP(+) is bound by residues 11-12 (FI), 32-33 (DD), Q39, Q54, 75-79 (QGACA), and N92. Y139 serves as the catalytic Proton acceptor. K143 contacts NADP(+). N168 provides a ligand contact to substrate. NADP(+) contacts are provided by V169 and K177. Catalysis depends on K177, which acts as the Proton acceptor. Residues R179, H186, 200–203 (FGEH), R213, and Y292 each bind substrate.

It belongs to the NAD(P)-dependent epimerase/dehydratase family. HldD subfamily. In terms of assembly, homopentamer. NADP(+) is required as a cofactor.

It carries out the reaction ADP-D-glycero-beta-D-manno-heptose = ADP-L-glycero-beta-D-manno-heptose. The protein operates within nucleotide-sugar biosynthesis; ADP-L-glycero-beta-D-manno-heptose biosynthesis; ADP-L-glycero-beta-D-manno-heptose from D-glycero-beta-D-manno-heptose 7-phosphate: step 4/4. Functionally, catalyzes the interconversion between ADP-D-glycero-beta-D-manno-heptose and ADP-L-glycero-beta-D-manno-heptose via an epimerization at carbon 6 of the heptose. The protein is ADP-L-glycero-D-manno-heptose-6-epimerase of Pseudomonas aeruginosa (strain UCBPP-PA14).